The following is a 745-amino-acid chain: Prolyl oligopeptidase ophP (745 aa).

Catalysis depends on charge relay system residues Ser-580, Asp-665, and His-701.

The protein belongs to the peptidase S9A family. Monomer.

The catalysed reaction is Hydrolysis of Pro-|-Xaa &gt;&gt; Ala-|-Xaa in oligopeptides.. Its pathway is mycotoxin biosynthesis. Its function is as follows. Prolyl oligopeptidase; part of the gene cluster that mediates the biosynthesis of omphalotin A, a highly methylated cyclic dodecapeptide with nematodicidal activity. Excises and catalyzes the macrocyclization of the methylated core peptide of OphMA to yield omphalotin A. OphP works in a two-step fashion with an initial cleavage at the N-terminus, followed by a second cleavage at the C-terminus of the core peptide. According to this mechanism, the free N-terminus of the core peptide, generated by the first cleavage, attacks the covalent intermediate of the second cleavage, which results in macrocyclization of the core peptide. The polypeptide is Prolyl oligopeptidase ophP (Omphalotus olearius (Jack o'lantern)).